The following is a 254-amino-acid chain: Glutathione S-transferase U12 (254 aa).

A Nuclear localization signal motif is present at residues 19 to 23; that stretch reads KKRKK. In terms of domain architecture, GST N-terminal spans 33–114; it reads TTVKLIGTWA…YVDESWPSDL (82 aa). Residues 43–44, 71–72, 85–86, and 98–99 each bind glutathione; these read SP, GK, KV, and ES. The GST C-terminal domain occupies 120 to 252; that stretch reads LPSERAFARF…EFIEFAKKKF (133 aa).

The protein belongs to the GST superfamily. Tau family.

It localises to the nucleus. It carries out the reaction RX + glutathione = an S-substituted glutathione + a halide anion + H(+). May be involved in the conjugation of reduced glutathione to a wide number of exogenous and endogenous hydrophobic electrophiles and have a detoxification role against certain herbicides. The protein is Glutathione S-transferase U12 (GSTU12) of Arabidopsis thaliana (Mouse-ear cress).